A 222-amino-acid polypeptide reads, in one-letter code: MKSINILSFLLLSSTLSLVAFARSFSSENPIVLPSTCHDDDNLVLPEVYDQDGHPLRIGQRYIINNPLIGAGAVYLYNIGNLQCPNAVLQHMSIPQFLGEGTPVVFVRKSESDYGDVVRVMTGVYIKFFVKTTKLCVDQTVWKVNHEGLVVTGGQVGNENDIFKIRKTDLVTPEGSKFVYKLLHCPSHLQCKNIGGNFKNGYPRLVTVDDDKDFLPFVFIKA.

Residues 1 to 26 (MKSINILSFLLLSSTLSLVAFARSFS) form the signal peptide. A propeptide spanning residues 27-42 (SENPIVLPSTCHDDDN) is cleaved from the precursor. The Vacuolar targeting signal signature appears at 29–34 (NPIVLP). 2 disulfide bridges follow: Cys-84–Cys-136 and Cys-185–Cys-191.

Belongs to the protease inhibitor I3 (leguminous Kunitz-type inhibitor) family. In terms of tissue distribution, tuber.

It is found in the vacuole. Functionally, putative inhibitor of cysteine proteases. Does not inhibit papain. May protect the plant by inhibiting proteases of invading organisms. The protein is Cysteine protease inhibitor 9 of Solanum tuberosum (Potato).